The following is an 80-amino-acid chain: Sulfur carrier protein TusA (80 aa).

The Cysteine persulfide intermediate role is filled by C17.

The protein belongs to the sulfur carrier protein TusA family.

It is found in the cytoplasm. In terms of biological role, sulfur carrier protein which probably makes part of a sulfur-relay system. This is Sulfur carrier protein TusA from Pseudomonas putida (strain W619).